We begin with the raw amino-acid sequence, 444 residues long: 23S rRNA (uracil(1939)-C(5))-methyltransferase RlmD (444 aa).

The 60-residue stretch at 5–64 (KPKLNLTSQTARIVNLSHDGRGIARINGKATFIQGALPGEVVEFQYTRVKKDFDEGKLLS) folds into the TRAM domain. [4Fe-4S] cluster contacts are provided by cysteine 77, cysteine 83, cysteine 86, and cysteine 166. The S-adenosyl-L-methionine site is built by glutamine 276, phenylalanine 305, asparagine 310, glutamate 326, asparagine 353, and aspartate 374. The Nucleophile role is filled by cysteine 400.

Belongs to the class I-like SAM-binding methyltransferase superfamily. RNA M5U methyltransferase family. RlmD subfamily.

The enzyme catalyses uridine(1939) in 23S rRNA + S-adenosyl-L-methionine = 5-methyluridine(1939) in 23S rRNA + S-adenosyl-L-homocysteine + H(+). Its function is as follows. Catalyzes the formation of 5-methyl-uridine at position 1939 (m5U1939) in 23S rRNA. The polypeptide is 23S rRNA (uracil(1939)-C(5))-methyltransferase RlmD (Legionella pneumophila (strain Lens)).